A 103-amino-acid polypeptide reads, in one-letter code: Histone H4 (103 aa).

Positions 1–14 (MSGRGKGGKGLGKG) are enriched in gly residues. The tract at residues 1-20 (MSGRGKGGKGLGKGGAKRHR) is disordered. At Ser-2 the chain carries N-acetylserine. An N6-acetyl-N6-methyllysine; alternate mark is found at Lys-6 and Lys-13. Lys-17 carries the post-translational modification N6-acetyllysine. Residues 17–21 (KRHRR) mediate DNA binding.

Belongs to the histone H4 family. In terms of assembly, the nucleosome is a histone octamer containing two molecules each of H2A, H2B, H3 and H4 assembled in one H3-H4 heterotetramer and two H2A-H2B heterodimers. The octamer wraps approximately 147 bp of DNA.

Its subcellular location is the nucleus. It localises to the chromosome. Functionally, core component of nucleosome. Nucleosomes wrap and compact DNA into chromatin, limiting DNA accessibility to the cellular machineries which require DNA as a template. Histones thereby play a central role in transcription regulation, DNA repair, DNA replication and chromosomal stability. DNA accessibility is regulated via a complex set of post-translational modifications of histones, also called histone code, and nucleosome remodeling. The protein is Histone H4 of Mytilus chilensis (Chilean blue mussel).